A 546-amino-acid polypeptide reads, in one-letter code: Chaperonin GroEL (546 aa).

ATP-binding positions include 30–33 (TMGP), K51, 87–91 (DGTTT), G415, 478–480 (NAA), and D494.

This sequence belongs to the chaperonin (HSP60) family. In terms of assembly, forms a cylinder of 14 subunits composed of two heptameric rings stacked back-to-back. Interacts with the co-chaperonin GroES.

It is found in the cytoplasm. The catalysed reaction is ATP + H2O + a folded polypeptide = ADP + phosphate + an unfolded polypeptide.. In terms of biological role, together with its co-chaperonin GroES, plays an essential role in assisting protein folding. The GroEL-GroES system forms a nano-cage that allows encapsulation of the non-native substrate proteins and provides a physical environment optimized to promote and accelerate protein folding. This chain is Chaperonin GroEL, found in Wolinella succinogenes (strain ATCC 29543 / DSM 1740 / CCUG 13145 / JCM 31913 / LMG 7466 / NCTC 11488 / FDC 602W) (Vibrio succinogenes).